Consider the following 1478-residue polypeptide: GTPase-activating protein and VPS9 domain-containing protein 1 (1478 aa).

The region spanning 147–385 (SYLLQVLRYL…AAFLDVVIGG (239 aa)) is the Ras-GAP domain. Serine 227 is subject to Phosphoserine. Threonine 390 and threonine 458 each carry phosphothreonine. The residue at position 460 (tyrosine 460) is a Phosphotyrosine. Serine 466 carries the phosphoserine modification. Threonine 470 is subject to Phosphothreonine. A phosphoserine mark is found at serine 566 and serine 569. Disordered regions lie at residues 574 to 608 (GISE…GSNG), 739 to 820 (ESCS…PPSQ), and 846 to 874 (HYAR…LPNF). The segment covering 578–588 (GPSNRSNSVSS) has biased composition (polar residues). Phosphoserine occurs at positions 742, 746, and 757. A compositionally biased stretch (polar residues) spans 758–777 (SRPSTPGLSVVSGISATSED). A Phosphothreonine modification is found at threonine 762. Residue serine 766 is modified to Phosphoserine. A compositionally biased stretch (basic and acidic residues) spans 778–789 (IPNKIEDLRSEC). Phosphoserine occurs at positions 876, 902, 903, 908, 914, and 966. The segment covering 889–902 (QRHSYPERLVRSRS) has biased composition (basic and acidic residues). Disordered regions lie at residues 889–1023 (QRHS…PRLS) and 1043–1064 (TSPS…DRDL). Composition is skewed to basic and acidic residues over residues 954–975 (DSSR…DRNR) and 997–1008 (EKQEKDKDDLGP). Over residues 1012–1023 (STLTDDPSPRLS) the composition is skewed to polar residues. Phosphoserine is present on residues serine 1019, serine 1046, serine 1096, and serine 1103. A VPS9 domain is found at 1338–1478 (ILRDQVLHEH…EFIKTIDDRK (141 aa)).

The protein belongs to the GAPVD1 family. Interacts with TRIP10/CIP4. Interacts with RAB5A. In terms of assembly, (Microbial infection) Interacts with P.falciparum (strain 3D7) CK1. As to expression, expressed in erythrocytes (at protein level).

It is found in the membrane. It localises to the endosome. Its function is as follows. Acts both as a GTPase-activating protein (GAP) and a guanine nucleotide exchange factor (GEF), and participates in various processes such as endocytosis, insulin receptor internalization or LC2A4/GLUT4 trafficking. Acts as a GEF for the Ras-related protein RAB31 by exchanging bound GDP for free GTP, leading to regulate LC2A4/GLUT4 trafficking. In the absence of insulin, it maintains RAB31 in an active state and promotes a futile cycle between LC2A4/GLUT4 storage vesicles and early endosomes, retaining LC2A4/GLUT4 inside the cells. Upon insulin stimulation, it is translocated to the plasma membrane, releasing LC2A4/GLUT4 from intracellular storage vesicles. Also involved in EGFR trafficking and degradation, possibly by promoting EGFR ubiquitination and subsequent degradation by the proteasome. Has GEF activity for Rab5 and GAP activity for Ras. The sequence is that of GTPase-activating protein and VPS9 domain-containing protein 1 (GAPVD1) from Homo sapiens (Human).